Consider the following 48-residue polypeptide: Cytochrome b559 subunit beta (48 aa).

Residues 23–39 (WLAVHALAIPTVFFLGA) traverse the membrane as a helical segment. His27 contributes to the heme binding site.

This sequence belongs to the PsbE/PsbF family. Heterodimer of an alpha subunit and a beta subunit. PSII is composed of 1 copy each of membrane proteins PsbA, PsbB, PsbC, PsbD, PsbE, PsbF, PsbH, PsbI, PsbJ, PsbK, PsbL, PsbM, PsbT, PsbX, PsbY, Psb30/Ycf12, peripheral proteins PsbO, CyanoQ (PsbQ), PsbU, PsbV and a large number of cofactors. It forms dimeric complexes. Heme b is required as a cofactor.

Its subcellular location is the cellular thylakoid membrane. Functionally, this b-type cytochrome is tightly associated with the reaction center of photosystem II (PSII). PSII is a light-driven water:plastoquinone oxidoreductase that uses light energy to abstract electrons from H(2)O, generating O(2) and a proton gradient subsequently used for ATP formation. It consists of a core antenna complex that captures photons, and an electron transfer chain that converts photonic excitation into a charge separation. The protein is Cytochrome b559 subunit beta of Prochlorococcus marinus (strain SARG / CCMP1375 / SS120).